The following is a 440-amino-acid chain: Glutamate-1-semialdehyde 2,1-aminomutase (440 aa).

The residue at position 273 (Lys-273) is an N6-(pyridoxal phosphate)lysine.

Belongs to the class-III pyridoxal-phosphate-dependent aminotransferase family. HemL subfamily. Homodimer. The cofactor is pyridoxal 5'-phosphate.

It localises to the cytoplasm. The catalysed reaction is (S)-4-amino-5-oxopentanoate = 5-aminolevulinate. It participates in porphyrin-containing compound metabolism; protoporphyrin-IX biosynthesis; 5-aminolevulinate from L-glutamyl-tRNA(Glu): step 2/2. This Alkaliphilus metalliredigens (strain QYMF) protein is Glutamate-1-semialdehyde 2,1-aminomutase.